The following is a 389-amino-acid chain: Glycerol-3-phosphate dehydrogenase [NAD(+)] 2 (389 aa).

Residues 40–45 (GSGNWG), phenylalanine 128, lysine 151, and alanine 184 each bind NAD(+). Lysine 151 contributes to the substrate binding site. Catalysis depends on lysine 244, which acts as the Proton acceptor. Residues arginine 309 and glutamine 338 each coordinate NAD(+). 309–310 (RN) serves as a coordination point for substrate.

Belongs to the NAD-dependent glycerol-3-phosphate dehydrogenase family.

Its subcellular location is the cytoplasm. The enzyme catalyses sn-glycerol 3-phosphate + NAD(+) = dihydroxyacetone phosphate + NADH + H(+). The sequence is that of Glycerol-3-phosphate dehydrogenase [NAD(+)] 2 (GPD2) from Zygosaccharomyces rouxii.